A 255-amino-acid polypeptide reads, in one-letter code: Ribonuclease HII (255 aa).

An RNase H type-2 domain is found at 58 to 247 (RYIAGIDEAG…VKSMVLGARY (190 aa)). 3 residues coordinate a divalent metal cation: aspartate 64, glutamate 65, and aspartate 156.

The protein belongs to the RNase HII family. Mn(2+) is required as a cofactor. It depends on Mg(2+) as a cofactor.

Its subcellular location is the cytoplasm. The catalysed reaction is Endonucleolytic cleavage to 5'-phosphomonoester.. In terms of biological role, endonuclease that specifically degrades the RNA of RNA-DNA hybrids. In Syntrophomonas wolfei subsp. wolfei (strain DSM 2245B / Goettingen), this protein is Ribonuclease HII.